Here is a 544-residue protein sequence, read N- to C-terminus: Chaperonin GroEL (544 aa).

Residues 30-33 (TLGP), K51, 87-91 (DGTTT), G415, and D495 contribute to the ATP site.

It belongs to the chaperonin (HSP60) family. In terms of assembly, forms a cylinder of 14 subunits composed of two heptameric rings stacked back-to-back. Interacts with the co-chaperonin GroES.

The protein localises to the cytoplasm. It carries out the reaction ATP + H2O + a folded polypeptide = ADP + phosphate + an unfolded polypeptide.. Functionally, together with its co-chaperonin GroES, plays an essential role in assisting protein folding. The GroEL-GroES system forms a nano-cage that allows encapsulation of the non-native substrate proteins and provides a physical environment optimized to promote and accelerate protein folding. The protein is Chaperonin GroEL of Bartonella bacilliformis.